The primary structure comprises 134 residues: Profilin-3 (134 aa).

Cysteines 13 and 118 form a disulfide. Positions 84–100 (AVIRGKKGSGGITIKKT) match the Involved in PIP2 interaction motif. Thr-114 carries the post-translational modification Phosphothreonine.

It belongs to the profilin family. As to quaternary structure, occurs in many kinds of cells as a complex with monomeric actin in a 1:1 ratio. Phosphorylated by MAP kinases.

Its subcellular location is the cytoplasm. It localises to the cytoskeleton. In terms of biological role, binds to actin and affects the structure of the cytoskeleton. At high concentrations, profilin prevents the polymerization of actin, whereas it enhances it at low concentrations. The polypeptide is Profilin-3 (Olea europaea (Common olive)).